Reading from the N-terminus, the 185-residue chain is Peptidyl-tRNA hydrolase (185 aa).

Tyr-14 is a tRNA binding site. Residue His-19 is the Proton acceptor of the active site. Phe-64, Asn-66, and Asn-112 together coordinate tRNA.

This sequence belongs to the PTH family. Monomer.

Its subcellular location is the cytoplasm. The catalysed reaction is an N-acyl-L-alpha-aminoacyl-tRNA + H2O = an N-acyl-L-amino acid + a tRNA + H(+). Its function is as follows. Hydrolyzes ribosome-free peptidyl-tRNAs (with 1 or more amino acids incorporated), which drop off the ribosome during protein synthesis, or as a result of ribosome stalling. Catalyzes the release of premature peptidyl moieties from peptidyl-tRNA molecules trapped in stalled 50S ribosomal subunits, and thus maintains levels of free tRNAs and 50S ribosomes. This Lactobacillus gasseri (strain ATCC 33323 / DSM 20243 / BCRC 14619 / CIP 102991 / JCM 1131 / KCTC 3163 / NCIMB 11718 / NCTC 13722 / AM63) protein is Peptidyl-tRNA hydrolase.